The primary structure comprises 522 residues: Amine oxidase [flavin-containing] (522 aa).

At 1–492 (MTAQNTFDVI…FWERNLPSVG (492 aa)) the chain is on the cytoplasmic side. At Cys399 the chain carries S-8alpha-FAD cysteine. A helical; Anchor for type IV membrane protein membrane pass occupies residues 493–513 (GFINFLAASVLSVATAAGMLA). Residues 514 to 522 (YQKGLLTRS) are Mitochondrial intermembrane-facing.

It belongs to the flavin monoamine oxidase family. It depends on FAD as a cofactor.

The protein localises to the mitochondrion outer membrane. The enzyme catalyses a secondary aliphatic amine + O2 + H2O = a primary amine + an aldehyde + H2O2. Its function is as follows. Catalyzes the oxidative deamination of biogenic and xenobiotic amines and has important functions in the metabolism of neuroactive and vasoactive amines in the central nervous system and peripheral tissues. Oxidizes both 5-hydroxytryptamine (5-HT) and beta-phenylethylamine (PEA). The protein is Amine oxidase [flavin-containing] (mao) of Oncorhynchus mykiss (Rainbow trout).